The primary structure comprises 126 residues: Major sperm protein 3 (126 aa).

Residue Ala-2 is modified to N-acetylalanine. The MSP domain maps to 8–125 (DIATMPAQKV…RRKNLPIEYN (118 aa)).

In terms of tissue distribution, sperm.

Its subcellular location is the cell projection. The protein localises to the pseudopodium. It localises to the cytoplasm. The protein resides in the cytoskeleton. Functionally, central component in molecular interactions underlying sperm crawling. Forms an extensive filament system that extends from sperm villipoda, along the leading edge of the pseudopod. The protein is Major sperm protein 3 (MSP-3) of Globodera rostochiensis (Golden nematode worm).